The following is a 157-amino-acid chain: S-ribosylhomocysteine lyase 2 (157 aa).

Fe cation-binding residues include His-54, His-58, and Cys-124.

Belongs to the LuxS family. In terms of assembly, homodimer. Fe cation serves as cofactor.

It catalyses the reaction S-(5-deoxy-D-ribos-5-yl)-L-homocysteine = (S)-4,5-dihydroxypentane-2,3-dione + L-homocysteine. Involved in the synthesis of autoinducer 2 (AI-2) which is secreted by bacteria and is used to communicate both the cell density and the metabolic potential of the environment. The regulation of gene expression in response to changes in cell density is called quorum sensing. Catalyzes the transformation of S-ribosylhomocysteine (RHC) to homocysteine (HC) and 4,5-dihydroxy-2,3-pentadione (DPD). This Lactobacillus delbrueckii subsp. bulgaricus (strain ATCC BAA-365 / Lb-18) protein is S-ribosylhomocysteine lyase 2.